Here is a 309-residue protein sequence, read N- to C-terminus: MKSWNNTIILEFLLLGISEEPELQAFLFGLFLSMYLVTVLGNLLIILATISDSHLHTPMYFFLSNLSFVDICFVSTTVPKMLVNIQTHNKVITYAGCITQMCFFLLFVGLDNFLLTVMAYDRFVAICHPLHYMVIMNPQLCGLLVLASWIMSVLNSMLQSLMVLPLPFCTHMEIPHFFCEINQVVHLACSDTFLNDIVMYFAVALLGGGPLTGILYSYSKIVSSIRAISSAQGKYKAFSTCASHLSVVSLFYGTCLGVYLSSAATHNSHTGAAASVMYTVVTPMLNPFIYSLRNKHIKGAMKTFFRGKQ.

Over 1 to 25 (MKSWNNTIILEFLLLGISEEPELQA) the chain is Extracellular. N-linked (GlcNAc...) asparagine glycosylation occurs at N5. The helical transmembrane segment at 26–46 (FLFGLFLSMYLVTVLGNLLII) threads the bilayer. At 47–54 (LATISDSH) the chain is on the cytoplasmic side. The chain crosses the membrane as a helical span at residues 55 to 75 (LHTPMYFFLSNLSFVDICFVS). Residues 76–99 (TTVPKMLVNIQTHNKVITYAGCIT) are Extracellular-facing. C97 and C189 are oxidised to a cystine. A helical transmembrane segment spans residues 100–120 (QMCFFLLFVGLDNFLLTVMAY). Residues 121-139 (DRFVAICHPLHYMVIMNPQ) lie on the Cytoplasmic side of the membrane. The helical transmembrane segment at 140 to 160 (LCGLLVLASWIMSVLNSMLQS) threads the bilayer. Residues 161-197 (LMVLPLPFCTHMEIPHFFCEINQVVHLACSDTFLNDI) are Extracellular-facing. The chain crosses the membrane as a helical span at residues 198–217 (VMYFAVALLGGGPLTGILYS). Residues 218-237 (YSKIVSSIRAISSAQGKYKA) lie on the Cytoplasmic side of the membrane. The chain crosses the membrane as a helical span at residues 238–258 (FSTCASHLSVVSLFYGTCLGV). At 259–271 (YLSSAATHNSHTG) the chain is on the extracellular side. A helical membrane pass occupies residues 272–292 (AAASVMYTVVTPMLNPFIYSL). At 293-309 (RNKHIKGAMKTFFRGKQ) the chain is on the cytoplasmic side.

The protein belongs to the G-protein coupled receptor 1 family.

The protein resides in the cell membrane. Functionally, odorant receptor. The protein is Olfactory receptor 7A10 (OR7A10) of Homo sapiens (Human).